The primary structure comprises 693 residues: Polyribonucleotide nucleotidyltransferase (693 aa).

Positions 489 and 495 each coordinate Mg(2+). A KH domain is found at 556 to 615; the sequence is PQIHVMNINPAKIKDVVGRGGATVKGIVEKTGAQIDTSDSGEVKVFAKDKKSMDMAVAMI. The S1 motif domain maps to 625 to 693; the sequence is GQVYKGKIVK…GRVKLSLVAR (69 aa).

The protein belongs to the polyribonucleotide nucleotidyltransferase family. As to quaternary structure, component of the RNA degradosome, which is a multiprotein complex involved in RNA processing and mRNA degradation. The cofactor is Mg(2+).

Its subcellular location is the cytoplasm. It catalyses the reaction RNA(n+1) + phosphate = RNA(n) + a ribonucleoside 5'-diphosphate. Involved in mRNA degradation. Catalyzes the phosphorolysis of single-stranded polyribonucleotides processively in the 3'- to 5'-direction. This chain is Polyribonucleotide nucleotidyltransferase, found in Francisella tularensis subsp. tularensis (strain FSC 198).